The primary structure comprises 378 residues: Succinyl-diaminopimelate desuccinylase 2 (378 aa).

Residue His68 coordinates Zn(2+). Residue Asp70 is part of the active site. Residue Asp101 participates in Zn(2+) binding. Residue Glu135 is the Proton acceptor of the active site. Zn(2+) is bound by residues Glu136, Glu164, and His350.

This sequence belongs to the peptidase M20A family. DapE subfamily. In terms of assembly, homodimer. Zn(2+) serves as cofactor. Co(2+) is required as a cofactor.

The enzyme catalyses N-succinyl-(2S,6S)-2,6-diaminopimelate + H2O = (2S,6S)-2,6-diaminopimelate + succinate. It participates in amino-acid biosynthesis; L-lysine biosynthesis via DAP pathway; LL-2,6-diaminopimelate from (S)-tetrahydrodipicolinate (succinylase route): step 3/3. Catalyzes the hydrolysis of N-succinyl-L,L-diaminopimelic acid (SDAP), forming succinate and LL-2,6-diaminopimelate (DAP), an intermediate involved in the bacterial biosynthesis of lysine and meso-diaminopimelic acid, an essential component of bacterial cell walls. The sequence is that of Succinyl-diaminopimelate desuccinylase 2 from Alteromonas mediterranea (strain DSM 17117 / CIP 110805 / LMG 28347 / Deep ecotype).